Consider the following 519-residue polypeptide: Signal transduction histidine-protein kinase/phosphatase MprB (519 aa).

Topologically, residues 1–26 (MVRFAWRRRASLRATSSLSLRWRVML) are cytoplasmic. The chain crosses the membrane as a helical span at residues 27–47 (LAMSMVAMVVVLMAFAVYVVI). The Extracellular segment spans residues 48–163 (SAALYSDIDN…PTEAVMTKLR (116 aa)). The helical transmembrane segment at 164–184 (WVLLIVGSLGVAVAAVAGGMV) threads the bilayer. At 185 to 519 (TRAGLRPVGR…SVDYQSARAR (335 aa)) the chain is on the cytoplasmic side. Residues 186–238 (RAGLRPVGRLTEAAERVARTDDLRPIPVFGSDELARLTEAFNLMLRALAESRE) form the HAMP domain. In terms of domain architecture, Histidine kinase spans 246–466 (DAGHELRTPL…SIYVLLPGRP (221 aa)). Phosphohistidine; by autocatalysis is present on His249.

Mg(2+) serves as cofactor. Mn(2+) is required as a cofactor. In terms of processing, autophosphorylated.

Its subcellular location is the cell membrane. It catalyses the reaction ATP + protein L-histidine = ADP + protein N-phospho-L-histidine.. Functionally, member of the two-component regulatory system MprB/MprA which contributes to maintaining a balance among several systems involved in stress resistance and is required for establishment and maintenance of persistent infection in the host. In response to environmental signals MprB acts both as a membrane-associated protein kinase that undergoes autophosphorylation and subsequently transfers the phosphate to MprA, and a protein phosphatase that dephosphorylates phospho-MprA. This is Signal transduction histidine-protein kinase/phosphatase MprB (mprB) from Mycobacterium leprae (strain TN).